The following is a 192-amino-acid chain: UPF0149 protein KPK_0755 (192 aa).

It belongs to the UPF0149 family.

This chain is UPF0149 protein KPK_0755, found in Klebsiella pneumoniae (strain 342).